We begin with the raw amino-acid sequence, 270 residues long: 3-methyl-2-oxobutanoate hydroxymethyltransferase (270 aa).

Mg(2+) contacts are provided by Asp-50 and Asp-89. 3-methyl-2-oxobutanoate is bound by residues 50 to 51, Asp-89, and Lys-118; that span reads DS. Residue Glu-120 coordinates Mg(2+). Glu-187 acts as the Proton acceptor in catalysis.

It belongs to the PanB family. As to quaternary structure, homodecamer; pentamer of dimers. It depends on Mg(2+) as a cofactor.

The protein localises to the cytoplasm. The enzyme catalyses 3-methyl-2-oxobutanoate + (6R)-5,10-methylene-5,6,7,8-tetrahydrofolate + H2O = 2-dehydropantoate + (6S)-5,6,7,8-tetrahydrofolate. It participates in cofactor biosynthesis; (R)-pantothenate biosynthesis; (R)-pantoate from 3-methyl-2-oxobutanoate: step 1/2. Functionally, catalyzes the reversible reaction in which hydroxymethyl group from 5,10-methylenetetrahydrofolate is transferred onto alpha-ketoisovalerate to form ketopantoate. This is 3-methyl-2-oxobutanoate hydroxymethyltransferase from Helicobacter pylori (strain Shi470).